Consider the following 166-residue polypeptide: UPF0304 protein PBPRA2768 (166 aa).

It belongs to the UPF0304 family.

This Photobacterium profundum (strain SS9) protein is UPF0304 protein PBPRA2768.